Consider the following 118-residue polypeptide: Fluoride-specific ion channel FluC 2 (118 aa).

Helical transmembrane passes span 1 to 21 (MMEA…RFAI), 33 to 53 (FPIA…YIIG), 55 to 75 (GVTT…FTTF), and 93 to 113 (ILFL…FLGM). Residues Gly-70 and Thr-73 each coordinate Na(+).

The protein belongs to the fluoride channel Fluc/FEX (TC 1.A.43) family.

Its subcellular location is the cell membrane. The catalysed reaction is fluoride(in) = fluoride(out). Its activity is regulated as follows. Na(+) is not transported, but it plays an essential structural role and its presence is essential for fluoride channel function. Fluoride-specific ion channel. Important for reducing fluoride concentration in the cell, thus reducing its toxicity. This Bacillus cereus (strain ATCC 10987 / NRS 248) protein is Fluoride-specific ion channel FluC 2.